Reading from the N-terminus, the 231-residue chain is Cell cycle transcriptional regulator CtrA (231 aa).

The 115-residue stretch at 2 to 116 (RVLLIEDDSA…EMIARIHAVV (115 aa)) folds into the Response regulatory domain. At Asp-51 the chain carries 4-aspartylphosphate. Residues 124–223 (QSVIKTGDIV…VWGRGYVLRD (100 aa)) constitute a DNA-binding region (ompR/PhoB-type).

In terms of processing, phosphorylated by CckA.

Functionally, forms part of a two-component regulatory system CtrA/CckA that controls multiple events in the cell cycle, including cell division, stalk synthesis and cell cycle-specific transcription. Binds to a group of cell cycle-regulated promoters critical for DNA replication, DNA methylation, and class II flagellar biogenesis. This chain is Cell cycle transcriptional regulator CtrA (ctrA), found in Caulobacter vibrioides (strain ATCC 19089 / CIP 103742 / CB 15) (Caulobacter crescentus).